We begin with the raw amino-acid sequence, 252 residues long: Ubiquinone biosynthesis protein COQ4 homolog 2, mitochondrial (252 aa).

4 residues coordinate Zn(2+): H130, D131, H134, and E146.

Belongs to the COQ4 family. As to quaternary structure, component of a multi-subunit COQ enzyme complex. The cofactor is Zn(2+).

The protein localises to the mitochondrion inner membrane. It catalyses the reaction a 4-hydroxy-3-methoxy-5-(all-trans-polyprenyl)benzoate + H(+) = a 2-methoxy-6-(all-trans-polyprenyl)phenol + CO2. It participates in cofactor biosynthesis; ubiquinone biosynthesis. Lyase that catalyzes the C1-decarboxylation of 4-hydroxy-3-methoxy-5-(all-trans-polyprenyl)benzoic acid into 2-methoxy-6-(all-trans-polyprenyl)phenol during ubiquinone biosynthesis. In Trypanosoma cruzi (strain CL Brener), this protein is Ubiquinone biosynthesis protein COQ4 homolog 2, mitochondrial.